Reading from the N-terminus, the 138-residue chain is Invertebrate-type lysozyme 6 (138 aa).

An N-terminal signal peptide occupies residues 1 to 18; the sequence is MFVKLCGILAFAVTYASS. The 120-residue stretch at 19-138 folds into the I-type lysozyme domain; it reads DCLQCICKKE…WNGIKGLGCS (120 aa). 6 disulfides stabilise this stretch: Cys20/Cys106, Cys25/Cys31, Cys36/Cys45, Cys58/Cys86, Cys76/Cys82, and Cys98/Cys120. Residue Glu28 is the Proton donor of the active site. The Nucleophile role is filled by Asp39. 51–57 lines the substrate pocket; sequence KLSYYKD. Residues Tyr90 and 113–115 contribute to the substrate site; that span reads HNG.

Belongs to the glycosyl hydrolase 22 family. Type-I lysozyme subfamily. As to expression, expressed in pharyngeal gland cells and duct projections, coelomocytes and intestine.

The catalysed reaction is Hydrolysis of (1-&gt;4)-beta-linkages between N-acetylmuramic acid and N-acetyl-D-glucosamine residues in a peptidoglycan and between N-acetyl-D-glucosamine residues in chitodextrins.. In terms of biological role, has bacteriolytic activity against Gram-positive bacteria. The chain is Invertebrate-type lysozyme 6 from Caenorhabditis elegans.